Consider the following 174-residue polypeptide: UPF0316 protein lwe1794 (174 aa).

3 helical membrane-spanning segments follow: residues 4–24 (GLFI…IYTV), 36–56 (LAAL…SLVL), and 62–82 (IANV…GMKI).

The protein belongs to the UPF0316 family.

The protein resides in the cell membrane. This Listeria welshimeri serovar 6b (strain ATCC 35897 / DSM 20650 / CCUG 15529 / CIP 8149 / NCTC 11857 / SLCC 5334 / V8) protein is UPF0316 protein lwe1794.